A 146-amino-acid polypeptide reads, in one-letter code: Probable gamma-secretase subunit PEN-2 (146 aa).

The disordered stretch occupies residues 1–26; sequence MEATRSDDPSLNPIRNRNPNPNPNPN. Over 1-61 the chain is Lumenal; sequence MEATRSDDPS…SVDYARRFYK (61 aa). Residues 9 to 19 are compositionally biased toward low complexity; sequence PSLNPIRNRNP. The chain crosses the membrane as a helical span at residues 62–82; it reads FGFALLPWLWFVNCFYFWPVL. Over 83 to 98 the chain is Cytoplasmic; it reads RHSRAFPQIRNYVVRS. A helical transmembrane segment spans residues 99–119; the sequence is AIGFSVFTALLSAWALTFSIG. The Lumenal portion of the chain corresponds to 120–146; sequence GEQLFGPLYDKLVMYNVADRLGLSGLA.

The protein belongs to the PEN-2 family. In terms of assembly, probable component of the gamma-secretase complex, a complex composed of a presenilin homodimer, nicastrin, APH1 and PEN2.

The protein resides in the membrane. Probable subunit of the gamma-secretase complex, an endoprotease complex that catalyzes the intramembrane cleavage of integral membrane proteins such as Notch receptors. This Arabidopsis thaliana (Mouse-ear cress) protein is Probable gamma-secretase subunit PEN-2.